We begin with the raw amino-acid sequence, 139 residues long: Large ribosomal subunit protein uL16 (139 aa).

Positions 1 to 20 (MLIPRRVKHRKQHHPKRRGQ) are enriched in basic residues. Residues 1–25 (MLIPRRVKHRKQHHPKRRGQAKGGT) are disordered.

Belongs to the universal ribosomal protein uL16 family. In terms of assembly, part of the 50S ribosomal subunit.

Binds 23S rRNA and is also seen to make contacts with the A and possibly P site tRNAs. The protein is Large ribosomal subunit protein uL16 of Streptomyces avermitilis (strain ATCC 31267 / DSM 46492 / JCM 5070 / NBRC 14893 / NCIMB 12804 / NRRL 8165 / MA-4680).